A 1198-amino-acid polypeptide reads, in one-letter code: Tetratricopeptide repeat protein 17 (1198 aa).

A TPR 1 repeat occupies 295 to 328; sequence FTSYYTLGNIYAMLGEYNHSVLCYDHALQAKPGF. A coiled-coil region spans residues 340-382; sequence CQQKLEQKLEAQHRSLQRTLNELKEYQKQHDHYLRQQEILEKH. TPR repeat units lie at residues 619–652 and 689–722; these read WLIL…APVQ and PLTF…STKC. Disordered regions lie at residues 774 to 793 and 902 to 954; these read LDAA…PVLS and VKKP…YQSL. The span at 902–914 shows a compositional bias: basic residues; it reads VKKPKGDHKKPPG. 3 TPR repeats span residues 1071–1105, 1108–1141, and 1142–1175; these read SWVL…APHQ, DVPL…APHF, and AVNH…QPEF.

This sequence belongs to the TTC17 family. As to quaternary structure, interacts with CATIP.

It localises to the cytoplasm. Its subcellular location is the cell membrane. The protein localises to the cytoskeleton. Plays a role in primary ciliogenesis by modulating actin polymerization. The chain is Tetratricopeptide repeat protein 17 (Ttc17) from Mus musculus (Mouse).